Reading from the N-terminus, the 255-residue chain is Ribonuclease HII (255 aa).

The RNase H type-2 domain maps to 72 to 255; sequence RLIAGVDEVG…KTFAPVQSFR (184 aa). A divalent metal cation is bound by residues Asp78, Glu79, and Asp170.

Belongs to the RNase HII family. Mn(2+) serves as cofactor. The cofactor is Mg(2+).

It localises to the cytoplasm. The enzyme catalyses Endonucleolytic cleavage to 5'-phosphomonoester.. Endonuclease that specifically degrades the RNA of RNA-DNA hybrids. In Bacillus subtilis (strain 168), this protein is Ribonuclease HII (rnhB).